A 325-amino-acid chain; its full sequence is MITAAAVPWQHRTVLLHEAVDALVQRPAGVYLDGTYGRGGHSRLILERLDPAGRLIAIDRDPEALANARSGETRIDDPRFSIHHARFAEFESVLDEAGVGQLDGLLLDLGISSPQIDNPERGFSFRFDGPLDMRMDPTRGQSAAEFLASAPFERIKEVVRDYGEERFADAVAKAIVARREEGRPVQRTAELAALVAGAVKTRERGQDPATRTFQALRILVNAELEEVEQGLNRALARLAPGGRLAVIAFHSLEDRIVKTFIARHAREVYDRRMPYATPAPLLMRAVARIKPGEAEVAANPRARSAILRVAERTDVPLPVVVGRYA.

S-adenosyl-L-methionine is bound by residues 39-41 (GGH), D59, F90, D108, and Q115.

It belongs to the methyltransferase superfamily. RsmH family.

The protein resides in the cytoplasm. It carries out the reaction cytidine(1402) in 16S rRNA + S-adenosyl-L-methionine = N(4)-methylcytidine(1402) in 16S rRNA + S-adenosyl-L-homocysteine + H(+). Functionally, specifically methylates the N4 position of cytidine in position 1402 (C1402) of 16S rRNA. The chain is Ribosomal RNA small subunit methyltransferase H from Leptothrix cholodnii (strain ATCC 51168 / LMG 8142 / SP-6) (Leptothrix discophora (strain SP-6)).